A 624-amino-acid polypeptide reads, in one-letter code: Mannosyl-oligosaccharide 1,2-alpha-mannosidase MNS3 (624 aa).

Over 1–43 the chain is Cytoplasmic; that stretch reads MSKSLPYSVKDIHYDNAKFRHRSPLKVFSQSLLTLSTKRNYAS. The chain crosses the membrane as a helical; Signal-anchor for type II membrane protein span at residues 44 to 64; it reads CSTGKFLILILFFGVACLMLM. Topologically, residues 65–624 are lumenal; that stretch reads SKSPNESGLN…AHPLPIRRNT (560 aa). Asn69 and Asn114 each carry an N-linked (GlcNAc...) asparagine glycan. The segment at 91-123 is disordered; the sequence is LRKPPRLPPRLSPDEGQLRGSSTNGSTISNSDP. Residues 110–121 show a composition bias toward low complexity; that stretch reads GSSTNGSTISNS. Glu212 (proton donor) is an active-site residue. N-linked (GlcNAc...) asparagine glycosylation is present at Asn236. Asp357 is an active-site residue. An N-linked (GlcNAc...) asparagine glycan is attached at Asn377. Residues Cys428 and Cys471 are joined by a disulfide bond. Catalysis depends on Glu485, which acts as the Proton donor. Asn503 is a glycosylation site (N-linked (GlcNAc...) asparagine). Glu526 is an active-site residue. Ca(2+) is bound at residue Thr613.

The protein belongs to the glycosyl hydrolase 47 family. The cofactor is Ca(2+). Requires Mn(2+) as cofactor. It depends on Mg(2+) as a cofactor. As to expression, expressed in flowers, siliques, stems, leaves, roots, stamens and sepals.

The protein resides in the golgi apparatus. The protein localises to the cis-Golgi network membrane. It carries out the reaction N(4)-(alpha-D-Man-(1-&gt;2)-alpha-D-Man-(1-&gt;2)-alpha-D-Man-(1-&gt;3)-[alpha-D-Man-(1-&gt;2)-alpha-D-Man-(1-&gt;3)-[alpha-D-Man-(1-&gt;2)-alpha-D-Man-(1-&gt;6)]-alpha-D-Man-(1-&gt;6)]-beta-D-Man-(1-&gt;4)-beta-D-GlcNAc-(1-&gt;4)-beta-D-GlcNAc)-L-asparaginyl-[protein] (N-glucan mannose isomer 9A1,2,3B1,2,3) + 4 H2O = N(4)-(alpha-D-Man-(1-&gt;3)-[alpha-D-Man-(1-&gt;3)-[alpha-D-Man-(1-&gt;6)]-alpha-D-Man-(1-&gt;6)]-beta-D-Man-(1-&gt;4)-beta-D-GlcNAc-(1-&gt;4)-beta-D-GlcNAc)-L-asparaginyl-[protein] (N-glucan mannose isomer 5A1,2) + 4 beta-D-mannose. The enzyme catalyses N(4)-(alpha-D-Man-(1-&gt;2)-alpha-D-Man-(1-&gt;2)-alpha-D-Man-(1-&gt;3)-[alpha-D-Man-(1-&gt;3)-[alpha-D-Man-(1-&gt;2)-alpha-D-Man-(1-&gt;6)]-alpha-D-Man-(1-&gt;6)]-beta-D-Man-(1-&gt;4)-beta-D-GlcNAc-(1-&gt;4)-beta-D-GlcNAc)-L-asparaginyl-[protein] (N-glucan mannose isomer 8A1,2,3B1,3) + 3 H2O = N(4)-(alpha-D-Man-(1-&gt;3)-[alpha-D-Man-(1-&gt;3)-[alpha-D-Man-(1-&gt;6)]-alpha-D-Man-(1-&gt;6)]-beta-D-Man-(1-&gt;4)-beta-D-GlcNAc-(1-&gt;4)-beta-D-GlcNAc)-L-asparaginyl-[protein] (N-glucan mannose isomer 5A1,2) + 3 beta-D-mannose. It catalyses the reaction N(4)-(alpha-D-Man-(1-&gt;2)-alpha-D-Man-(1-&gt;2)-alpha-D-Man-(1-&gt;3)-[alpha-D-Man-(1-&gt;2)-alpha-D-Man-(1-&gt;3)-[alpha-D-Man-(1-&gt;2)-alpha-D-Man-(1-&gt;6)]-alpha-D-Man-(1-&gt;6)]-beta-D-Man-(1-&gt;4)-beta-D-GlcNAc-(1-&gt;4)-beta-D-GlcNAc)-L-asparaginyl-[protein] (N-glucan mannose isomer 9A1,2,3B1,2,3) + H2O = N(4)-(alpha-D-Man-(1-&gt;2)-alpha-D-Man-(1-&gt;2)-alpha-D-Man-(1-&gt;3)-[alpha-D-Man-(1-&gt;3)-[alpha-D-Man-(1-&gt;2)-alpha-D-Man-(1-&gt;6)]-alpha-D-Man-(1-&gt;6)]-beta-D-Man-(1-&gt;4)-beta-D-GlcNAc-(1-&gt;4)-beta-D-GlcNAc)-L-asparaginyl-[protein] (N-glucan mannose isomer 8A1,2,3B1,3) + beta-D-mannose. The protein operates within protein modification; protein glycosylation. Inhibited by kifunensine and 1-deoxymannojirimycin, but not by swainsonine. Its function is as follows. Class I alpha-mannosidase essential for early N-glycan processing. Removes preferentially alpha-1,2-linked mannose residues from Man(9)GlcNAc(2) to produce Man(8)GlcNAc(2). Involved in root development and cell wall biosynthesis. The protein is Mannosyl-oligosaccharide 1,2-alpha-mannosidase MNS3 (MNS3) of Arabidopsis thaliana (Mouse-ear cress).